Reading from the N-terminus, the 328-residue chain is Probable cell division protein WhiA (328 aa).

The H-T-H motif DNA-binding region spans 276 to 309 (SLEELGRLADPQMTKDAVAGRIRRLLHMADKKAS).

The protein belongs to the WhiA family.

Its function is as follows. Involved in cell division and chromosome segregation. The protein is Probable cell division protein WhiA of Corynebacterium diphtheriae (strain ATCC 700971 / NCTC 13129 / Biotype gravis).